Here is a 294-residue protein sequence, read N- to C-terminus: MSIALDMDASAKMRKQPGSSGWSTSSTPSCSVIVPAFRENLNLRPLVTRLSSAFASQSSSELANTEIIIVDDNSRDGSVETVSALQSEGYNVRIIVRTSERGLSSAVVRGFREARGQRMICMDADLQHPPEAVPSLLLALNGQKSFVLGTRYGVGVSMDKDWPLHRRIISSGARMLARPLTSASDPMSGFFGITKHSFHTADHHINAQGFKIALDLLVKSGVHSTDIAEVPFSFGLRQEGESKLDGKVMFKYLQQLVELYRFRFGTVPIVFVLIVLLVLALYIWSHVLAPMLGA.

A disordered region spans residues 1–27; sequence MSIALDMDASAKMRKQPGSSGWSTSST. Topologically, residues 1–263 are cytoplasmic; sequence MSIALDMDAS…QQLVELYRFR (263 aa). A compositionally biased stretch (low complexity) spans 17 to 27; it reads PGSSGWSTSST. GDP-alpha-D-mannose-binding residues include P35, E39, V70, D72, D123, A124, D125, Q127, R151, K211, R237, and K243. D125 and Q127 together coordinate Mg(2+). Mn(2+) is bound by residues D125 and Q127. The helical transmembrane segment at 264–284 threads the bilayer; the sequence is FGTVPIVFVLIVLLVLALYIW. At 285 to 294 the chain is on the lumenal side; sequence SHVLAPMLGA.

This sequence belongs to the glycosyltransferase 2 family. The cofactor is Mg(2+). Mn(2+) is required as a cofactor. It depends on Ca(2+) as a cofactor.

It is found in the endoplasmic reticulum membrane. The enzyme catalyses a di-trans,poly-cis-dolichyl phosphate + GDP-alpha-D-mannose = a di-trans,poly-cis-dolichyl beta-D-mannosyl phosphate + GDP. Its pathway is protein modification; protein glycosylation. Transfers mannose from GDP-mannose to dolichol monophosphate to form dolichol phosphate mannose (Dol-P-Man) which is the mannosyl donor in pathways leading to N-glycosylation, glycosyl phosphatidylinositol membrane anchoring, and O-mannosylation of proteins. The polypeptide is Dolichol-phosphate mannosyltransferase (DPM1) (Mycosarcoma maydis (Corn smut fungus)).